Here is a 240-residue protein sequence, read N- to C-terminus: Carboxy-S-adenosyl-L-methionine synthase (240 aa).

S-adenosyl-L-methionine is bound by residues Tyr-35, 61–63 (GCS), 86–87 (DN), 112–113 (DI), and Arg-194.

Belongs to the class I-like SAM-binding methyltransferase superfamily. Cx-SAM synthase family. Homodimer.

It carries out the reaction prephenate + S-adenosyl-L-methionine = carboxy-S-adenosyl-L-methionine + 3-phenylpyruvate + H2O. Functionally, catalyzes the conversion of S-adenosyl-L-methionine (SAM) to carboxy-S-adenosyl-L-methionine (Cx-SAM). This is Carboxy-S-adenosyl-L-methionine synthase from Wolinella succinogenes (strain ATCC 29543 / DSM 1740 / CCUG 13145 / JCM 31913 / LMG 7466 / NCTC 11488 / FDC 602W) (Vibrio succinogenes).